Here is a 388-residue protein sequence, read N- to C-terminus: G2/mitotic-specific cyclin-B2 (388 aa).

A disordered region spans residues 46 to 67; the sequence is ATNGKVGPSKKPSKASCVQKPK.

It belongs to the cyclin family. Cyclin AB subfamily. In terms of assembly, interacts with the CDK1 protein kinase to form a serine/threonine kinase holoenzyme complex also known as maturation promoting factor (MPF). The cyclin subunit imparts substrate specificity to the complex.

Functionally, essential for the control of the cell cycle at the G2/M (mitosis) transition. The protein is G2/mitotic-specific cyclin-B2 (ccnb2) of Oryzias curvinotus (Hynann ricefish).